A 311-amino-acid chain; its full sequence is Serpentine receptor class gamma-6 (311 aa).

Helical transmembrane passes span Met-24–Ile-44, Phe-58–Phe-78, Pro-101–Ala-121, Leu-148–Ile-168, Tyr-200–Trp-220, Ile-235–Met-255, and Ile-266–Ile-286.

This sequence belongs to the nematode receptor-like protein srg family.

The protein localises to the membrane. In Caenorhabditis elegans, this protein is Serpentine receptor class gamma-6 (srg-6).